The chain runs to 718 residues: MIVDKLLDDSRGGEGLRDAAGGCGLMTSPLNLSYFYGASPPAAAPGACDASCSVLGPSAPGSPGSDSSDFSSASSVSSCGAVESRSRGGARAERQPVEPHMGVGRQQRGPFQGVRVKNSVKELLLHIRSHKQKASGQAVDDFKTQGVNIEQFRELKNTVSYSGKRKGPDSLSDGPACKRPALLHSQFLTPPQTPTPGESMEDVHLNEPKQESSADLLQNIINIKNECSPVSLNTVQVSWLNPVVVPQSSPAEQCQDFHGGQVFSPPQKCQPFQVRGSQQMIDQASLYQYSPQNQHVEQQPHYTHKPTLEYSPFPIPPQSPAYEPNLFDGPESQFCPNQSLVSLLGDQRESENIANPMQTSSSVQQQNDAHLHSFSMMPSSACEAMVGHEMASDSSNTSLPFSNMGNPMNTTQLGKSLFQWQVEQEESKLANISQDQFLSKDADGDTFLHIAVAQGRRALSYVLARKMNALHMLDIKEHNGQSAFQVAVAANQHLIVQDLVNIGAQVNTTDCWGRTPLHVCAEKGHSQVLQAIQKGAVGSNQFVDLEATNYDGLTPLHCAVIAHNAVVHELQRNQQPHSPEVQELLLKNKSLVDTIKCLIQMGAAVEAKDRKSGRTALHLAAEEANLELIRLFLELPSCLSFVNAKAYNGNTALHVAASLQYRLTQLDAVRLLMRKGADPSTRNLENEQPVHLVPDGPVGEQIRRILKGKSIQQRAPPY.

The segment covering 1–17 (MIVDKLLDDSRGGEGLR) has biased composition (basic and acidic residues). Disordered regions lie at residues 1–20 (MIVDKLLDDSRGGEGLRDAA) and 58–108 (SAPG…RQQR). Residues 58-83 (SAPGSPGSDSSDFSSASSVSSCGAVE) show a composition bias toward low complexity. Basic and acidic residues predominate over residues 84–97 (SRSRGGARAERQPV). Positions 108 to 130 (RGPFQGVRVKNSVKELLLHIRSH) constitute an OCA domain. A Nuclear localization signal motif is present at residues 164 to 179 (KRKGPDSLSDGPACKR). Residues 186-211 (QFLTPPQTPTPGESMEDVHLNEPKQE) are disordered. Positions 201–211 (EDVHLNEPKQE) are enriched in basic and acidic residues. Residues 321 to 394 (AYEPNLFDGP…MVGHEMASDS (74 aa)) form a required for transcriptional activity region. The interaction with NFKB1/p50 stretch occupies residues 404–718 (MGNPMNTTQL…KSIQQRAPPY (315 aa)). ANK repeat units follow at residues 443 to 472 (DGDTFLHIAVAQGRRALSYVLARKMNALHM), 479 to 508 (NGQSAFQVAVAANQHLIVQDLVNIGAQVNT), 512 to 541 (WGRTPLHVCAEKGHSQVLQAIQKGAVGSNQ), 551 to 580 (DGLTPLHCAVIAHNAVVHELQRNQQPHSPE), 582 to 607 (QELLLKNKSLVDTIKCLIQMGAAVEA), 612 to 641 (SGRTALHLAAEEANLELIRLFLELPSCLSF), and 648 to 681 (NGNTALHVAASLQYRLTQLDAVRLLMRKGADPST).

Interacts with NFKB1/p50. Interacts with RELA. Interacts with AKIRIN2. In terms of tissue distribution, expressed at high levels in peripheral blood leukocytes and lung, at moderate levels in liver, placenta, and at low levels in spleen, kidney, skeletal muscle and heart.

It is found in the nucleus. In terms of biological role, involved in regulation of NF-kappa-B transcription factor complexes. Inhibits NF-kappa-B activity without affecting its nuclear translocation upon stimulation. Inhibits DNA-binding of RELA and NFKB1/p50, and of the NF-kappa-B p65-p50 heterodimer and the NF-kappa-B p50-p50 homodimer. Also seems to activate NF-kappa-B-mediated transcription. In vitro, upon association with NFKB1/p50 has transcriptional activation activity and, together with NFKB1/p50 and RELA, is recruited to LCN2 promoters. Promotes transcription of LCN2 and DEFB4. Is recruited to IL-6 promoters and activates IL-6 but decreases TNF-alpha production in response to LPS. Seems to be involved in the induction of inflammatory genes activated through TLR/IL-1 receptor signaling. Involved in the induction of T helper 17 cells (Th17) differentiation upon recognition of antigen by T cell antigen receptor (TCR). In Homo sapiens (Human), this protein is NF-kappa-B inhibitor zeta (NFKBIZ).